A 118-amino-acid polypeptide reads, in one-letter code: Fluoride-specific ion channel FluC 1 (118 aa).

2 consecutive transmembrane segments (helical) span residues 5 to 25 (FLLV…ISVL) and 47 to 67 (FLLG…FLGT). The Na(+) site is built by G71 and T74. Residues 98–118 (YLGFTYVFGLIAAFLGMMLGV) traverse the membrane as a helical segment.

The protein belongs to the fluoride channel Fluc/FEX (TC 1.A.43) family.

Its subcellular location is the cell membrane. It carries out the reaction fluoride(in) = fluoride(out). Na(+) is not transported, but it plays an essential structural role and its presence is essential for fluoride channel function. Functionally, fluoride-specific ion channel. Important for reducing fluoride concentration in the cell, thus reducing its toxicity. The chain is Fluoride-specific ion channel FluC 1 from Listeria monocytogenes serovar 1/2a (strain ATCC BAA-679 / EGD-e).